The primary structure comprises 211 residues: Ribosomal RNA small subunit methyltransferase G (211 aa).

S-adenosyl-L-methionine-binding positions include Gly-73, 126 to 127, and Arg-142; that span reads IE.

The protein belongs to the methyltransferase superfamily. RNA methyltransferase RsmG family.

It localises to the cytoplasm. The enzyme catalyses guanosine(527) in 16S rRNA + S-adenosyl-L-methionine = N(7)-methylguanosine(527) in 16S rRNA + S-adenosyl-L-homocysteine. In terms of biological role, specifically methylates the N7 position of guanine in position 527 of 16S rRNA. In Methylorubrum extorquens (strain PA1) (Methylobacterium extorquens), this protein is Ribosomal RNA small subunit methyltransferase G.